The chain runs to 151 residues: UPF0735 ACT domain-containing protein SAUSA300_1599 (151 aa).

The region spanning 74–149 (TLILYVTDIV…YVSKVELISM (76 aa)) is the ACT domain.

It belongs to the UPF0735 family.

The polypeptide is UPF0735 ACT domain-containing protein SAUSA300_1599 (Staphylococcus aureus (strain USA300)).